A 440-amino-acid chain; its full sequence is Discs overgrown protein kinase (440 aa).

In terms of domain architecture, Protein kinase spans 9-277 (YRLGRKIGSG…HLRKLFRNLF (269 aa)). ATP contacts are provided by residues 15–23 (IGSGSFGDI) and K38. The Proton acceptor role is filled by D128. A nuclear localization signal; essential for interaction with Bdbt and important for nuclear localization region spans residues 221-224 (KRQK). A phosphoserine mark is found at S333 and S334. The interval 376–440 (SQLIGGNGLN…GGGGGVGNAK (65 aa)) is disordered. A compositionally biased stretch (gly residues) spans 413-440 (QGGGGGGGGVGVGGMPSGGGGGGVGNAK).

This sequence belongs to the protein kinase superfamily. CK1 Ser/Thr protein kinase family. Casein kinase I subfamily. In terms of assembly, forms a complex with per. Interacts with Dlish. Interacts (via nuclear localization signal) with Bdbt. In terms of tissue distribution, detected in the head (at protein level). Expressed in photoreceptor cells of the eyes as well as in the region situated between the optic lobe and the central brain.

The protein resides in the nucleus. Its subcellular location is the cytoplasm. It is found in the cytosol. It catalyses the reaction L-seryl-[protein] + ATP = O-phospho-L-seryl-[protein] + ADP + H(+). The enzyme catalyses L-threonyl-[protein] + ATP = O-phospho-L-threonyl-[protein] + ADP + H(+). Serine/threonine-protein kinase which is involved in the circadian rhythm pathway, viability and planar cell polarity. In the circadian rhythm pathway, phosphorylates the clock gene period (per) and targets it for degradation in the absence of timeless (tim), thus contributing to production of the circadian oscillations of the clock genes. Together with CkIalpha, regulates processing of ci by phosphorylating it, which promotes its binding to slmb, the F-box recognition component of the SCF(slmb) E3 ubiquitin-protein ligase. Involved in the inhibition of apoptosis during cell proliferation and growth arrest in imaginal disks. Also functions in planar cell polarity. The chain is Discs overgrown protein kinase (dco) from Drosophila melanogaster (Fruit fly).